A 911-amino-acid chain; its full sequence is Nitrate reductase [NADH], clone PBNBR1405 (911 aa).

The segment at 1 to 68 (MATSVDNRHY…RFDSSDDEDE (68 aa)) is disordered. The span at 49–62 (KSVDKTTKEDRFDS) shows a compositional bias: basic and acidic residues. Cys-191 lines the Mo-molybdopterin pocket. The 76-residue stretch at 539–614 (SKMYSMSEVR…LEDYRIGELI (76 aa)) folds into the Cytochrome b5 heme-binding domain. Residues His-574 and His-597 each contribute to the heme site. The FAD-binding FR-type domain occupies 654-766 (REKVPVKLIE…KGPLGHIEYQ (113 aa)). Residues 706–709 (RAYT), 723–727 (VIKVY), Phe-728, Phe-735, 740–742 (LMS), and Thr-793 contribute to the FAD site.

It belongs to the nitrate reductase family. In terms of assembly, homodimer. FAD serves as cofactor. Requires heme as cofactor. It depends on Mo-molybdopterin as a cofactor.

It carries out the reaction nitrite + NAD(+) + H2O = nitrate + NADH + H(+). Nitrate reductase is a key enzyme involved in the first step of nitrate assimilation in plants, fungi and bacteria. The polypeptide is Nitrate reductase [NADH], clone PBNBR1405 (NIA1) (Brassica napus (Rape)).